Here is a 153-residue protein sequence, read N- to C-terminus: 6,7-dimethyl-8-ribityllumazine synthase (153 aa).

5-amino-6-(D-ribitylamino)uracil-binding positions include Trp-22, 56–58 (SYE), and 80–82 (AVI). 85–86 (AT) contributes to the (2S)-2-hydroxy-3-oxobutyl phosphate binding site. His-88 (proton donor) is an active-site residue. Leu-113 provides a ligand contact to 5-amino-6-(D-ribitylamino)uracil. Arg-127 is a (2S)-2-hydroxy-3-oxobutyl phosphate binding site.

This sequence belongs to the DMRL synthase family.

It carries out the reaction (2S)-2-hydroxy-3-oxobutyl phosphate + 5-amino-6-(D-ribitylamino)uracil = 6,7-dimethyl-8-(1-D-ribityl)lumazine + phosphate + 2 H2O + H(+). The protein operates within cofactor biosynthesis; riboflavin biosynthesis; riboflavin from 2-hydroxy-3-oxobutyl phosphate and 5-amino-6-(D-ribitylamino)uracil: step 1/2. In terms of biological role, catalyzes the formation of 6,7-dimethyl-8-ribityllumazine by condensation of 5-amino-6-(D-ribitylamino)uracil with 3,4-dihydroxy-2-butanone 4-phosphate. This is the penultimate step in the biosynthesis of riboflavin. This chain is 6,7-dimethyl-8-ribityllumazine synthase, found in Herpetosiphon aurantiacus (strain ATCC 23779 / DSM 785 / 114-95).